A 1389-amino-acid polypeptide reads, in one-letter code: DNA-directed RNA polymerase subunit beta (1389 aa).

It belongs to the RNA polymerase beta chain family. As to quaternary structure, in plastids the minimal PEP RNA polymerase catalytic core is composed of four subunits: alpha, beta, beta', and beta''. When a (nuclear-encoded) sigma factor is associated with the core the holoenzyme is formed, which can initiate transcription.

Its subcellular location is the plastid. It localises to the chloroplast. It catalyses the reaction RNA(n) + a ribonucleoside 5'-triphosphate = RNA(n+1) + diphosphate. Its function is as follows. DNA-dependent RNA polymerase catalyzes the transcription of DNA into RNA using the four ribonucleoside triphosphates as substrates. The sequence is that of DNA-directed RNA polymerase subunit beta from Phaeodactylum tricornutum (strain CCAP 1055/1).